Reading from the N-terminus, the 476-residue chain is Beta-xylosidase (476 aa).

E188 (proton donor) is an active-site residue. The Nucleophile role is filled by E292. A glycan (N-linked (GlcNAc...) asparagine) is linked at N468.

It belongs to the glycosyl hydrolase 5 (cellulase A) family.

Its subcellular location is the secreted. It carries out the reaction Hydrolysis of (1-&gt;4)-beta-D-xylans, to remove successive D-xylose residues from the non-reducing termini.. Catalyzes the hydrolysis of xylo-oligomers to xylose units and plays an important role in xylan degradation. Can also perform the transglycosylation of xylose and alcohol. Has no endoglucanase activity. This chain is Beta-xylosidase, found in Phanerodontia chrysosporium (White-rot fungus).